Consider the following 409-residue polypeptide: Serine protease inhibitor 2 (409 aa).

A signal peptide spans 1–21 (MNKLNFVILCLAALLVFDATA). N-linked (GlcNAc...) asparagine glycosylation is found at Asn-294 and Asn-324. The Hinge region; required for binding to peptidase signature appears at 356–360 (LGSEA).

Belongs to the serpin family. Forms a covalent heterodimer with protease CLIPB9; the interaction inhibits CLIPB9 protease activity. Forms a covalent heterodimer with protease CLIPB10; the interaction inhibits CLIPB10 catalytic activity. Interacts with CLIPB4 in the hemolymph of immune-challenged female mosquitoes; the interaction results in CLIPB4 inhibition. Post-translationally, protease CLIPB9 binds to SRPN2 via the hinge region resulting in the cleavage of the reactive bond. This leads to a conformational change in SRPN2 which traps CLIPB9 and distorts its active site, resulting in CLIPB9 inactivation.

The protein resides in the secreted. Functionally, serine protease inhibitor that functions in the melanization-mediated immune response. By preventing the activation of phenoloxidases through the inhibiting of serine proteases CLIPB9, CLIPB10 and CLIPB4, negatively regulates melanization in the hemolymph. By preventing melanization, has a detrimental role during P.berghei parasite mediated-infection and invasion of the mosquito midgut. The protein is Serine protease inhibitor 2 of Anopheles gambiae (African malaria mosquito).